Consider the following 197-residue polypeptide: Phosphoheptose isomerase (197 aa).

One can recognise an SIS domain in the interval 41-197 (VVETFRRGGK…EIVERTLFEE (157 aa)). Substrate is bound at residue 56–58 (NGG). Residues His65 and Glu69 each contribute to the Zn(2+) site. Substrate is bound by residues Glu69, 98-99 (ND), 124-126 (STS), Ser129, and Gln176. Zn(2+) is bound by residues Gln176 and His184.

This sequence belongs to the SIS family. GmhA subfamily. Zn(2+) is required as a cofactor.

The protein localises to the cytoplasm. The catalysed reaction is 2 D-sedoheptulose 7-phosphate = D-glycero-alpha-D-manno-heptose 7-phosphate + D-glycero-beta-D-manno-heptose 7-phosphate. Its pathway is carbohydrate biosynthesis; D-glycero-D-manno-heptose 7-phosphate biosynthesis; D-glycero-alpha-D-manno-heptose 7-phosphate and D-glycero-beta-D-manno-heptose 7-phosphate from sedoheptulose 7-phosphate: step 1/1. In terms of biological role, catalyzes the isomerization of sedoheptulose 7-phosphate in D-glycero-D-manno-heptose 7-phosphate. This Roseiflexus sp. (strain RS-1) protein is Phosphoheptose isomerase.